The following is an 898-amino-acid chain: Methionine--tRNA ligase, cytoplasmic (898 aa).

Residues glycine 74–leucine 198 enclose the GST C-terminal domain. The 'HIGH' region signature appears at proline 273 to asparagine 283. The 'KMSKS' region motif lies at lysine 593–serine 597. ATP is bound at residue lysine 596. Position 825 is a phosphoserine (serine 825). Threonine 833 carries the phosphothreonine modification. The region spanning glutamine 839 to lysine 895 is the WHEP-TRS domain.

Belongs to the class-I aminoacyl-tRNA synthetase family. Monomer. Part of a multisubunit complex that groups tRNA ligases for Arg (RARS1), Asp (DARS1), Gln (QARS1), Ile (IARS1), Leu (LARS1), Lys (KARS1), Met (MARS1) the bifunctional ligase for Glu and Pro (EPRS1) and the auxiliary subunits AIMP1/p43, AIMP2/p38 and EEF1E1/p18. Forms a linear complex that contains MARS1, EEF1E1, EPRS1 and AIMP2 that is at the core of the multisubunit complex.

It is found in the cytoplasm. Its subcellular location is the cytosol. The protein localises to the nucleus. The protein resides in the nucleolus. It catalyses the reaction tRNA(Met) + L-methionine + ATP = L-methionyl-tRNA(Met) + AMP + diphosphate. Its function is as follows. Catalyzes the specific attachment of an amino acid to its cognate tRNA in a 2 step reaction: the amino acid (AA) is first activated by ATP to form AA-AMP and then transferred to the acceptor end of the tRNA. Plays a role in the synthesis of ribosomal RNA in the nucleolus. The protein is Methionine--tRNA ligase, cytoplasmic (MARS1) of Bos taurus (Bovine).